The following is a 364-amino-acid chain: uncharacterized protein (364 aa).

The next 3 membrane-spanning stretches (helical) occupy residues 41 to 61 (NIFTHIFLFLLIIVSGLFFGL), 298 to 318 (VIYILLFLIIDSLILLVITYM), and 329 to 349 (LLFYIFGLLSFNPIVWASIII).

It localises to the membrane. This is an uncharacterized protein from Mycoplasma capricolum subsp. capricolum (strain California kid / ATCC 27343 / NCTC 10154).